We begin with the raw amino-acid sequence, 362 residues long: Phosphoserine aminotransferase (362 aa).

Arginine 43 contacts L-glutamate. Pyridoxal 5'-phosphate-binding positions include 77 to 78, tryptophan 103, threonine 153, aspartate 173, and glutamine 196; that span reads AT. Lysine 197 is modified (N6-(pyridoxal phosphate)lysine). Pyridoxal 5'-phosphate is bound at residue 238 to 239; sequence NT.

This sequence belongs to the class-V pyridoxal-phosphate-dependent aminotransferase family. SerC subfamily. In terms of assembly, homodimer. Pyridoxal 5'-phosphate serves as cofactor.

Its subcellular location is the cytoplasm. The enzyme catalyses O-phospho-L-serine + 2-oxoglutarate = 3-phosphooxypyruvate + L-glutamate. The catalysed reaction is 4-(phosphooxy)-L-threonine + 2-oxoglutarate = (R)-3-hydroxy-2-oxo-4-phosphooxybutanoate + L-glutamate. It participates in amino-acid biosynthesis; L-serine biosynthesis; L-serine from 3-phospho-D-glycerate: step 2/3. Its pathway is cofactor biosynthesis; pyridoxine 5'-phosphate biosynthesis; pyridoxine 5'-phosphate from D-erythrose 4-phosphate: step 3/5. In terms of biological role, catalyzes the reversible conversion of 3-phosphohydroxypyruvate to phosphoserine and of 3-hydroxy-2-oxo-4-phosphonooxybutanoate to phosphohydroxythreonine. The protein is Phosphoserine aminotransferase of Xylella fastidiosa (strain 9a5c).